Reading from the N-terminus, the 191-residue chain is Early nodulin-like protein 8 (191 aa).

Residues 1-22 (MGVMSLSKTMVVVVLQVMILLG) form the signal peptide. In terms of domain architecture, Phytocyanin spans 31 to 133 (TLYKVGDLDA…YQKLLVSVGT (103 aa)). A disulfide bridge links Cys87 with Cys121. Residues Asn104 and Asn108 are each glycosylated (N-linked (GlcNAc...) asparagine). Ser165 carries the GPI-anchor amidated serine lipid modification. Positions 166-191 (SASSSLISAFSTVAASLACAVVGAIM) are cleaved as a propeptide — removed in mature form.

This sequence belongs to the early nodulin-like (ENODL) family. Mostly expressed in seedlings and roots, and, to a lower extent, in leaves, flowers, stems and seeds.

Its subcellular location is the cell membrane. Its function is as follows. May act as a carbohydrate transporter. This chain is Early nodulin-like protein 8, found in Arabidopsis thaliana (Mouse-ear cress).